Consider the following 225-residue polypeptide: Cytidylate kinase (225 aa).

G12–T20 provides a ligand contact to ATP.

Belongs to the cytidylate kinase family. Type 1 subfamily.

It localises to the cytoplasm. The catalysed reaction is CMP + ATP = CDP + ADP. It catalyses the reaction dCMP + ATP = dCDP + ADP. The sequence is that of Cytidylate kinase from Stenotrophomonas maltophilia (strain R551-3).